Consider the following 283-residue polypeptide: Diphthine methyl ester synthase (283 aa).

S-adenosyl-L-methionine contacts are provided by residues leucine 9, aspartate 84, glycine 87, 112–113, leucine 163, methionine 221, and histidine 246; that span reads SI.

Belongs to the diphthine synthase family.

The protein localises to the cytoplasm. It catalyses the reaction 2-[(3S)-amino-3-carboxypropyl]-L-histidyl-[translation elongation factor 2] + 4 S-adenosyl-L-methionine = diphthine methyl ester-[translation elongation factor 2] + 4 S-adenosyl-L-homocysteine + 3 H(+). Its pathway is protein modification; peptidyl-diphthamide biosynthesis. Its function is as follows. S-adenosyl-L-methionine-dependent methyltransferase that catalyzes four methylations of the modified target histidine residue in translation elongation factor 2 (EF-2), to form an intermediate called diphthine methyl ester. The four successive methylation reactions represent the second step of diphthamide biosynthesis. This Schizosaccharomyces pombe (strain 972 / ATCC 24843) (Fission yeast) protein is Diphthine methyl ester synthase (dph5).